The following is a 544-amino-acid chain: CTP synthase (544 aa).

The segment at 1-265 (MTRYIFITGG…DTQVLAYFGL (265 aa)) is amidoligase domain. Residue S13 participates in CTP binding. A UTP-binding site is contributed by S13. Residue 14–19 (SLGKGL) participates in ATP binding. Residue Y54 coordinates L-glutamine. D71 contributes to the ATP binding site. Mg(2+) is bound by residues D71 and E139. CTP-binding positions include 146–148 (DIE), 186–191 (KTKPTQ), and K222. Residues 186 to 191 (KTKPTQ) and K222 each bind UTP. V240 serves as a coordination point for ATP. The Glutamine amidotransferase type-1 domain maps to 291-543 (TIAVVGKYTS…IKAAIEQSRL (253 aa)). G353 provides a ligand contact to L-glutamine. C380 functions as the Nucleophile; for glutamine hydrolysis in the catalytic mechanism. Residues 381-384 (FGMQ), E404, and R472 contribute to the L-glutamine site. Residues H516 and E518 contribute to the active site.

Belongs to the CTP synthase family. In terms of assembly, homotetramer.

The enzyme catalyses UTP + L-glutamine + ATP + H2O = CTP + L-glutamate + ADP + phosphate + 2 H(+). It carries out the reaction L-glutamine + H2O = L-glutamate + NH4(+). The catalysed reaction is UTP + NH4(+) + ATP = CTP + ADP + phosphate + 2 H(+). Its pathway is pyrimidine metabolism; CTP biosynthesis via de novo pathway; CTP from UDP: step 2/2. Allosterically activated by GTP, when glutamine is the substrate; GTP has no effect on the reaction when ammonia is the substrate. The allosteric effector GTP functions by stabilizing the protein conformation that binds the tetrahedral intermediate(s) formed during glutamine hydrolysis. Inhibited by the product CTP, via allosteric rather than competitive inhibition. Functionally, catalyzes the ATP-dependent amination of UTP to CTP with either L-glutamine or ammonia as the source of nitrogen. Regulates intracellular CTP levels through interactions with the four ribonucleotide triphosphates. This Azospirillum brasilense protein is CTP synthase.